The chain runs to 450 residues: Phospho-2-dehydro-3-deoxyheptonate aldolase (450 aa).

Positions 1 to 13 (MTVNAKTSPSAGN) are enriched in polar residues. The disordered stretch occupies residues 1-20 (MTVNAKTSPSAGNTWRDLPA).

This sequence belongs to the class-II DAHP synthase family. Homodimer.

It catalyses the reaction D-erythrose 4-phosphate + phosphoenolpyruvate + H2O = 7-phospho-2-dehydro-3-deoxy-D-arabino-heptonate + phosphate. The protein operates within metabolic intermediate biosynthesis; chorismate biosynthesis; chorismate from D-erythrose 4-phosphate and phosphoenolpyruvate: step 1/7. The chain is Phospho-2-dehydro-3-deoxyheptonate aldolase (aroH) from Streptomyces coelicolor (strain ATCC BAA-471 / A3(2) / M145).